Consider the following 304-residue polypeptide: uncharacterized protein (304 aa).

Coiled coils occupy residues Lys-3 to Ile-35 and Lys-89 to Leu-132. Residues Leu-96–Glu-121 form a disordered region.

This is an uncharacterized protein from Acanthamoeba polyphaga (Amoeba).